The following is a 212-amino-acid chain: Large ribosomal subunit protein bL25 (212 aa).

It belongs to the bacterial ribosomal protein bL25 family. CTC subfamily. In terms of assembly, part of the 50S ribosomal subunit; part of the 5S rRNA/L5/L18/L25 subcomplex. Contacts the 5S rRNA. Binds to the 5S rRNA independently of L5 and L18.

This is one of the proteins that binds to the 5S RNA in the ribosome where it forms part of the central protuberance. In Leptospira interrogans serogroup Icterohaemorrhagiae serovar copenhageni (strain Fiocruz L1-130), this protein is Large ribosomal subunit protein bL25.